We begin with the raw amino-acid sequence, 407 residues long: Flagellar calcium-binding protein TB-44A (407 aa).

Residues methionine 1–threonine 27 are disordered. The tract at residues lysine 25–glutamate 399 is 2 X 186 AA almost perfect repeats. The EF-hand 1 domain maps to glutamate 48–leucine 83. Ca(2+) is bound by residues aspartate 61, asparagine 63, threonine 65, lysine 67, and glutamate 72. An ancestral calcium site 2 region spans residues glycine 110–glutamate 121. 3 EF-hand domains span residues tyrosine 130 to tryptophan 165, valine 167 to glutamine 202, and glutamate 237 to leucine 272. Ca(2+) is bound by residues aspartate 143, aspartate 145, serine 147, glutamate 154, aspartate 180, asparagine 182, serine 184, glutamate 191, aspartate 250, asparagine 252, threonine 254, lysine 256, and glutamate 261. The tract at residues glycine 299 to glutamate 310 is ancestral calcium site 6. EF-hand domains lie at tyrosine 319–tryptophan 354 and valine 356–glutamine 391. Residues aspartate 332, aspartate 334, serine 336, glutamate 343, aspartate 369, asparagine 371, serine 373, and glutamate 380 each coordinate Ca(2+).

The protein belongs to the calflagin family.

It localises to the cell projection. The protein resides in the cilium. The protein localises to the flagellum. Functionally, may contribute to the rapid motility of the trypanosomes, playing a role either in flagellar structure or in calcium metabolism. Could alternate between a GDP-bound inactive form to a calcium/GTP-bound active form. The chain is Flagellar calcium-binding protein TB-44A from Trypanosoma brucei brucei.